Reading from the N-terminus, the 228-residue chain is Calcyclin-binding protein (228 aa).

At Ala2 the chain carries N-acetylalanine. Residues 2-80 (ASEELQKDLE…YTVKISNYGW (79 aa)) form an interaction with SIAH1 region. Ser3 carries the post-translational modification Phosphoserine. Lys8 and Lys19 each carry N6-acetyllysine. The residue at position 34 (Ser34) is a Phosphoserine. Positions 73–167 (VKISNYGWDQ…VENTRWDYLT (95 aa)) constitute a CS domain. The segment at 73-228 (VKISNYGWDQ…EKQAKGDTEF (156 aa)) is interaction with SKP1. N6-acetyllysine occurs at positions 85 and 118. An interaction with S100A6 region spans residues 154-228 (CRKKVENTRW…EKQAKGDTEF (75 aa)). The region spanning 168–228 (QVEKECKEKE…EKQAKGDTEF (61 aa)) is the SGS domain.

In terms of assembly, component of some large E3 complex at least composed of UBE2D1, SIAH1, CACYBP/SIP, SKP1, APC and TBL1X. Interacts directly with SIAH1, SIAH2 and SKP1. Interacts with protein of the S100 family S100A1, S100A6, S100B, S100P and S100A12 in a calcium-dependent manner. In terms of processing, phosphorylated on serine residues. Phosphorylated upon induction by RA or at high calcium concentrations.

It is found in the nucleus. The protein localises to the cytoplasm. May be involved in calcium-dependent ubiquitination and subsequent proteasomal degradation of target proteins. Probably serves as a molecular bridge in ubiquitin E3 complexes. Participates in the ubiquitin-mediated degradation of beta-catenin (CTNNB1). This Macaca fascicularis (Crab-eating macaque) protein is Calcyclin-binding protein (CACYBP).